Consider the following 428-residue polypeptide: Pyruvate kinase (428 aa).

Arg-34 lines the substrate pocket. Positions 36, 38, 68, and 69 each coordinate K(+). 36-39 (NFSH) serves as a coordination point for ATP. 2 residues coordinate ATP: Arg-75 and Lys-152. Glu-214 provides a ligand contact to Mg(2+). Substrate-binding residues include Gly-237, Asp-238, and Thr-270. Asp-238 is a Mg(2+) binding site.

This sequence belongs to the pyruvate kinase family. In terms of assembly, homotetramer. It depends on Mg(2+) as a cofactor. Requires K(+) as cofactor.

It catalyses the reaction pyruvate + ATP = phosphoenolpyruvate + ADP + H(+). Its pathway is carbohydrate degradation; glycolysis; pyruvate from D-glyceraldehyde 3-phosphate: step 5/5. The protein is Pyruvate kinase (PYK1) of Encephalitozoon cuniculi (strain GB-M1) (Microsporidian parasite).